The primary structure comprises 117 residues: Glutamine-rich protein (117 aa).

Positions 27-72 are enriched in low complexity; it reads RQQFQQQQQQQRQPQLQQQQQQQGIQQQPQGLQHQQQQFGLTQQHG. Residues 27 to 88 form a disordered region; that stretch reads RQQFQQQQQQ…IVQPNPASQN (62 aa). The segment covering 75 to 87 has biased composition (polar residues); the sequence is RRQNIVQPNPASQ.

In terms of tissue distribution, component of the acid-soluble and acid-insoluble organic matrix of calcified shell layers (at protein level).

Its subcellular location is the secreted. This Haliotis asinina (Donkey's ear abalone) protein is Glutamine-rich protein.